Here is a 220-residue protein sequence, read N- to C-terminus: Thioredoxin domain-containing protein (220 aa).

The first 19 residues, 1–19 (MKFLILNCLILFSLISSEA), serve as a signal peptide directing secretion. A Thioredoxin domain is found at 20 to 141 (TNVKLDREDQ…SEFALGDFKN (122 aa)). The Lumenal segment spans residues 20–181 (TNVKLDREDQ…YDAALAGFVT (162 aa)). The cysteines at positions 64 and 67 are disulfide-linked. A helical transmembrane segment spans residues 182 to 202 (ISSFSFLFGLLVGLMLSLFLF). The Cytoplasmic portion of the chain corresponds to 203 to 220 (TRRATRKPKVLTERKKDK). A Di-lysine motif motif is present at residues 217–220 (KKDK).

The protein belongs to the protein disulfide isomerase family.

It is found in the endoplasmic reticulum membrane. This is Thioredoxin domain-containing protein from Theileria parva (East coast fever infection agent).